The sequence spans 226 residues: Orotate phosphoribosyltransferase (226 aa).

5-phospho-alpha-D-ribose 1-diphosphate is bound by residues Arg107, Lys108, Lys111, and 133–141 (EDLTTDGGS). Residue Thr137 participates in orotate binding.

The protein belongs to the purine/pyrimidine phosphoribosyltransferase family. PyrE subfamily. In terms of assembly, homodimer. Requires Mg(2+) as cofactor.

It carries out the reaction orotidine 5'-phosphate + diphosphate = orotate + 5-phospho-alpha-D-ribose 1-diphosphate. The protein operates within pyrimidine metabolism; UMP biosynthesis via de novo pathway; UMP from orotate: step 1/2. Catalyzes the transfer of a ribosyl phosphate group from 5-phosphoribose 1-diphosphate to orotate, leading to the formation of orotidine monophosphate (OMP). This Ruegeria sp. (strain TM1040) (Silicibacter sp.) protein is Orotate phosphoribosyltransferase.